We begin with the raw amino-acid sequence, 151 residues long: FAD synthase (151 aa).

Residues 21-22 (TF), 26-29 (HPGH), and Asp104 contribute to the ATP site.

Belongs to the archaeal FAD synthase family. Homodimer. A divalent metal cation is required as a cofactor.

It catalyses the reaction FMN + ATP + H(+) = FAD + diphosphate. The protein operates within cofactor biosynthesis; FAD biosynthesis; FAD from FMN: step 1/1. Catalyzes the transfer of the AMP portion of ATP to flavin mononucleotide (FMN) to produce flavin adenine dinucleotide (FAD) coenzyme. The polypeptide is FAD synthase (Methanosarcina acetivorans (strain ATCC 35395 / DSM 2834 / JCM 12185 / C2A)).